The sequence spans 504 residues: MSFSVDVLANIAIELQRGIGHQDRFQRLITTLRQVLECDASALLRYDSRQFIPLAIDGLAKDVLGRRFALEGHPRLEAIARAGDVVRFPADSELPDPYDGLIPGQESLKVHACVGLPLFAGQNLIGALTLDGMQPDQFDVFSDEELRLIAALAAGALSNALLIEQLESQNMLPGDAAPFEAVKQTQMIGLSPGMTQLKKEIEIVAASDLNVLISGETGTGKELVAKAIHEASPRAVNPLIYLNCAALPESVAESELFGHVKGAFTGAISNRSGKFEMADNGTLFLDEIGELSLALQAKLLRVLQYGDIQRVGDDRSLRVDVRVLAATNRDLREEVLAGRFRADLFHRLSVFPLSVPPLRERGDDVILLAGYFCEQCRLRLGLSRVVLSAGARNLLQHYSFPGNVRELEHAIHRAVVLSRATRSGDEVILEAQHFAFPEVTLPPPEAAAVPVVKQNLREATEAFQRETIRQALAQNHHNWAACARMLETDVANLHRLAKRLGLKD.

A 4-aspartylphosphate modification is found at D57. Positions 187–416 constitute a Sigma-54 factor interaction domain; the sequence is MIGLSPGMTQ…LEHAIHRAVV (230 aa). ATP-binding positions include 215–222 and 278–287; these read GETGTGKE and ADNGTLFLDE. Residues 479–498 constitute a DNA-binding region (H-T-H motif); it reads WAACARMLETDVANLHRLAK.

It participates in nitrogen metabolism; nitric oxide reduction. Required for the expression of anaerobic nitric oxide (NO) reductase, acts as a transcriptional activator for at least the norVW operon. Activation also requires sigma-54. In Escherichia coli (strain SE11), this protein is Anaerobic nitric oxide reductase transcription regulator NorR.